The primary structure comprises 75 residues: Meucin-49 (75 aa).

Residues 1-22 (MNKKILLVIFIVTMLIVDEVNS) form the signal peptide.

It belongs to the non-disulfide-bridged peptide (NDBP) superfamily. Long chain multifunctional peptide (group 2) family. As to expression, expressed by the venom gland.

The protein resides in the secreted. Functionally, insecticidal toxin and antimicrobial peptide with potent activity against both Gram-negative and -positive bacteria, as well as against fungi. Acts by disrupting bacterial membrane integrity. Shows broad-spectrum and highly potent bactericidal activities against the Gram-positive bacteria B.cereus, B.megaterium, B.subtilis, M.luteus, S.aureus, S.epidermidis, S.warneri, S.griseus, S.scabiei, S.mutans, S.salivarius, and S.sanguinis. Also exhibits a wide spectrum of activity against the Gram-negative bacteria A.faecalis, E.coli, P.aeruginosa, P.solanacearum, S.enterica, S.marcescens, and S.maltophilia. Also shows antimicrobial activities against the fungal strains Aspergillus flavus, A.fumigatus, A.nidulans, A.niger, Beauveria bassiana, and Saccharomyces cerevisiae. Its antibiotic activity is potentiated by other antibacterial peptides such as MeuNaTxbeta-4. Also induces cytolysis on mice, lizards and birds erythrocytes. This Mesobuthus eupeus (Lesser Asian scorpion) protein is Meucin-49.